Reading from the N-terminus, the 462-residue chain is Sensor histidine kinase RegB (462 aa).

Topologically, residues 1–25 (MILGPDGILNRDTRGDWWRLRTLIL) are cytoplasmic. A helical membrane pass occupies residues 26-45 (LRWMAVAGQLAAIVVTDWYL). At 46-51 (GVRLPM) the chain is on the extracellular side. A helical transmembrane segment spans residues 52-70 (GLCFMAVGASVIANVIATF). Over 71–78 (VFPQNRRL) the chain is Cytoplasmic. A helical transmembrane segment spans residues 79–96 (TEFQALMILLFDLTQLSF). At 97–103 (LLFLTGG) the chain is on the extracellular side. The chain crosses the membrane as a helical span at residues 104–123 (LTNPFALLILAPVTISGVAL). The Cytoplasmic segment spans residues 124 to 129 (DVRTTV). The chain crosses the membrane as a helical span at residues 130 to 149 (ILGAIAIGLLTFTAYFHLPL). The Extracellular segment spans residues 150-164 (ILADGSSLSVPRMFE). A helical transmembrane segment spans residues 165-182 (FGFWLAIVIGILFLGLYS). Residues 183–462 (RRVAIEIRSM…PLGENVLIQT (280 aa)) lie on the Cytoplasmic side of the membrane. A Histidine kinase domain is found at 218 to 445 (AAAHELGTPL…IVEVIWPVDR (228 aa)). Residue His-221 is modified to Phosphohistidine; by autocatalysis.

It localises to the cell inner membrane. The catalysed reaction is ATP + protein L-histidine = ADP + protein N-phospho-L-histidine.. Its function is as follows. Member of the two-component regulatory system RegB/RegA. Involved in the positive regulation of photosynthesis gene expression in response to anaerobiosis. Also involved in positive regulation of the cbbI and cbbII Calvin cycle CO2 fixation operons, as well as in regulation of expression of genes involved in alternative CO2 fixation pathways. Phosphorylates RegA/PrrA. The chain is Sensor histidine kinase RegB (regB) from Cereibacter sphaeroides (Rhodobacter sphaeroides).